A 257-amino-acid polypeptide reads, in one-letter code: NAD-capped RNA hydrolase NudC (257 aa).

Arg69 provides a ligand contact to substrate. 2 residues coordinate Zn(2+): Cys98 and Cys101. Glu111 lines the substrate pocket. Zn(2+) is bound by residues Cys116 and Cys119. Residue Tyr124 coordinates substrate. Residues 125–248 form the Nudix hydrolase domain; it reads PQIAPCIIVA…TVARRLIEDT (124 aa). Residues Ala158, Glu174, and Glu178 each contribute to the a divalent metal cation site. Positions 159-180 match the Nudix box motif; sequence GFVEVGETLEQAVAREVMEESG. 192 to 199 is a substrate binding site; sequence QPWPFPQS. Residue Glu219 participates in a divalent metal cation binding. Ala241 contributes to the substrate binding site.

It belongs to the Nudix hydrolase family. NudC subfamily. In terms of assembly, homodimer. Mg(2+) is required as a cofactor. The cofactor is Mn(2+). It depends on Zn(2+) as a cofactor.

It catalyses the reaction a 5'-end NAD(+)-phospho-ribonucleoside in mRNA + H2O = a 5'-end phospho-adenosine-phospho-ribonucleoside in mRNA + beta-nicotinamide D-ribonucleotide + 2 H(+). The enzyme catalyses NAD(+) + H2O = beta-nicotinamide D-ribonucleotide + AMP + 2 H(+). The catalysed reaction is NADH + H2O = reduced beta-nicotinamide D-ribonucleotide + AMP + 2 H(+). Its function is as follows. mRNA decapping enzyme that specifically removes the nicotinamide adenine dinucleotide (NAD) cap from a subset of mRNAs by hydrolyzing the diphosphate linkage to produce nicotinamide mononucleotide (NMN) and 5' monophosphate mRNA. The NAD-cap is present at the 5'-end of some mRNAs and stabilizes RNA against 5'-processing. Has preference for mRNAs with a 5'-end purine. Catalyzes the hydrolysis of a broad range of dinucleotide pyrophosphates. In Klebsiella pneumoniae (strain 342), this protein is NAD-capped RNA hydrolase NudC.